We begin with the raw amino-acid sequence, 582 residues long: MASPPPIVEYAVFFTILAVLVFVAGEYLAWVYREQANSDHRPPGYLSWFERLDEIFTPIENGLYRLSGINPRREMTWKGYLKAVLVFNVCIWVLLFVVLMFQDALPMNFVGVGGESWDLAFHTASSFTSNTNQQHYSGETLSVFTHTFGIGIAMFLTPATGLALMPAFARAFTNKEDPRLGNFYENVVRGLVRFLLPISLLIAIILMAEGSVQTILGGQLTANTFTMGIQNIRIGPHAGIEAIKMFGTNGGGINAANAATAFENPTPLSNLVLTLAMPIGTFSAIYAWGAWVGNRSHGVAIVAAFFVIYMALTGVAVVGETGTNAGMVVTGNGLHVDQTVGNMEGKETRFGPTASAIWGLSTTGTTNGGVNSMHNSWTALGAFSLLFAFATNNISNGVGTGLLNILMFVILTAFIGALMIGRRPQYLGKKLEWQEMRYVFVVILVLPILVLIPQAAAVVYQGAIDSMNNPGFRGFSEVLYEFFSASANNGSGFEGLGDGTLFFNLVNGVQVLLARYVPITAQLAIAGYLANKKVSPESKGSLDTDTPAFVGLLIGVIIIVSALVFLPALVFGPIGELLSGGI.

10 helical membrane-spanning segments follow: residues 11-31 (AVFFTILAVLVFVAGEYLAWV), 81-101 (LKAVLVFNVCIWVLLFVVLMF), 148-168 (FGIGIAMFLTPATGLALMPAF), 195-215 (LLPISLLIAIILMAEGSVQTI), 272-292 (VLTLAMPIGTFSAIYAWGAWV), 298-318 (GVAIVAAFFVIYMALTGVAVV), 379-399 (ALGAFSLLFAFATNNISNGVG), 401-421 (GLLNILMFVILTAFIGALMIG), 439-459 (VFVVILVLPILVLIPQAAAVV), and 551-571 (GLLIGVIIIVSALVFLPALVF).

Belongs to the KdpA family. As to quaternary structure, the system is composed of three essential subunits: KdpA, KdpB and KdpC.

The protein localises to the cell membrane. Its function is as follows. Part of the high-affinity ATP-driven potassium transport (or Kdp) system, which catalyzes the hydrolysis of ATP coupled with the electrogenic transport of potassium into the cytoplasm. This subunit binds the extracellular potassium ions and delivers the ions to the membrane domain of KdpB through an intramembrane tunnel. This is Potassium-transporting ATPase potassium-binding subunit from Halobacterium salinarum (strain ATCC 700922 / JCM 11081 / NRC-1) (Halobacterium halobium).